The following is a 67-amino-acid chain: Conotoxin TsMMSK-011 (67 aa).

The first 20 residues, 1 to 20 (MMSKLGVLLTICLLLFPLTA), serve as a signal peptide directing secretion. Residues 21-50 (VQLDGDQPADLPALRTQDIATDHSPWFDPV) constitute a propeptide that is removed on maturation. Intrachain disulfides connect C53–C65, C54–C61, and C58–C64. The residue at position 63 (P63) is a 4-hydroxyproline.

The protein belongs to the conotoxin M superfamily. In terms of tissue distribution, expressed by the venom duct.

The protein resides in the secreted. This Conus tessulatus (Tessellate cone) protein is Conotoxin TsMMSK-011.